A 630-amino-acid chain; its full sequence is MGFRFSDYDVIVVGGGHAGAEAALAAARMGEHTLLITQTIDSIGRLSCNPSIGGISKGNIVREIDALGGEMGKFADACMIQYRLLNKSRGPAVQAPRIQADKFLYAQKVKYTLECTQHLHLYQDTVVDVVCSNTTDAGYVAYGAAHAVVTARGRRISARAVVLTTGTFMEGRVYIGEYEAPEGRLGEHAAEGLGAALRKKGFQMGRLKTGTPARVLRKSVDLSVMEKQEADAIMRPFSFAHVEINRPHADCYINYTNERTHQLIRENFHRSPFFSGRIKAVGTRYCPSIEDKVRKFPDRIRHQLYIEPEGLDTEELYINGLSSCLPEDIQDEMIRTIPGMERAVITRPAYAVDYAVLFPVQLGIDLQTKRVSGLFSAGQINGTSGYEEAGGQGIIAGINAALYARSTKTKEEYHPFVLKRDEAYIGVMIDDLVTQGIDEPYRMFTARAEYRLKLRHDTADERLTEKAYAIGLQKKSAVETLQKKMRTKHEILHLLQTNKVSLTHANAYVQLKPHIGKSFAATLRDPVIPLGLIASLNEQIAQFPLEVFQSVGVEIRYEHYIAAQDQRIAQVEKMEGIKIPAHFDYARISGLSVESRTRLEHVRPDTIGQVGRMRGIRPSDVMLLLAHLKR.

An FAD-binding site is contributed by 14–19; it reads GGGHAG. 282 to 296 provides a ligand contact to NAD(+); sequence GTRYCPSIEDKVRKF.

Belongs to the MnmG family. In terms of assembly, homodimer. Heterotetramer of two MnmE and two MnmG subunits. FAD is required as a cofactor.

The protein resides in the cytoplasm. Functionally, NAD-binding protein involved in the addition of a carboxymethylaminomethyl (cmnm) group at the wobble position (U34) of certain tRNAs, forming tRNA-cmnm(5)s(2)U34. This is tRNA uridine 5-carboxymethylaminomethyl modification enzyme MnmG from Treponema pallidum (strain Nichols).